Reading from the N-terminus, the 590-residue chain is Potassium-transporting ATPase potassium-binding subunit (590 aa).

10 helical membrane passes run 11–31 (IFIA…AAVF), 64–84 (TAYC…TYLI), 136–156 (GLAT…IAFI), 178–198 (ILWV…SQGV), 273–293 (MLEM…LGQM), 301–321 (WAVL…CYWA), 403–423 (AGLY…GLMV), 442–462 (AMLY…VAVL), 511–531 (LGFA…ALAG), and 552–572 (LFTV…FLPA).

The protein belongs to the KdpA family. As to quaternary structure, the system is composed of three essential subunits: KdpA, KdpB and KdpC.

The protein localises to the cell inner membrane. Functionally, part of the high-affinity ATP-driven potassium transport (or Kdp) system, which catalyzes the hydrolysis of ATP coupled with the electrogenic transport of potassium into the cytoplasm. This subunit binds the periplasmic potassium ions and delivers the ions to the membrane domain of KdpB through an intramembrane tunnel. In Acidobacterium capsulatum (strain ATCC 51196 / DSM 11244 / BCRC 80197 / JCM 7670 / NBRC 15755 / NCIMB 13165 / 161), this protein is Potassium-transporting ATPase potassium-binding subunit.